A 329-amino-acid chain; its full sequence is 3-isopropylmalate dehydrogenase (329 aa).

The substrate site is built by Arg-83, Arg-93, Arg-114, and Asp-200. 3 residues coordinate Mg(2+): Asp-200, Asp-224, and Asp-228. 257-269 is an NAD(+) binding site; that stretch reads GSAPQIAGKNIAN.

It belongs to the isocitrate and isopropylmalate dehydrogenases family. In terms of assembly, homotetramer. Mg(2+) is required as a cofactor. Requires Mn(2+) as cofactor.

The protein resides in the cytoplasm. It catalyses the reaction (2R,3S)-3-isopropylmalate + NAD(+) = 4-methyl-2-oxopentanoate + CO2 + NADH. The protein operates within amino-acid biosynthesis; L-leucine biosynthesis; L-leucine from 3-methyl-2-oxobutanoate: step 3/4. Its function is as follows. Catalyzes the oxidation of 3-carboxy-2-hydroxy-4-methylpentanoate (3-isopropylmalate) to 3-carboxy-4-methyl-2-oxopentanoate. The product decarboxylates to 4-methyl-2 oxopentanoate. This is 3-isopropylmalate dehydrogenase (leuB) from Methanothermobacter thermautotrophicus (strain ATCC 29096 / DSM 1053 / JCM 10044 / NBRC 100330 / Delta H) (Methanobacterium thermoautotrophicum).